Consider the following 89-residue polypeptide: Small ribosomal subunit protein uS15 (89 aa).

This sequence belongs to the universal ribosomal protein uS15 family. As to quaternary structure, part of the 30S ribosomal subunit. Forms a bridge to the 50S subunit in the 70S ribosome, contacting the 23S rRNA.

In terms of biological role, one of the primary rRNA binding proteins, it binds directly to 16S rRNA where it helps nucleate assembly of the platform of the 30S subunit by binding and bridging several RNA helices of the 16S rRNA. Forms an intersubunit bridge (bridge B4) with the 23S rRNA of the 50S subunit in the ribosome. The chain is Small ribosomal subunit protein uS15 from Vibrio parahaemolyticus serotype O3:K6 (strain RIMD 2210633).